The following is a 447-amino-acid chain: Ameloblastin (447 aa).

An N-terminal signal peptide occupies residues 1–26 (MSASKIPLFKMKDLILILCLLEMSFA). Proline 37 is modified (hydroxyproline). Serine 43 bears the Phosphoserine mark. The O-linked (GalNAc...) serine glycan is linked to serine 112. 3 disordered regions span residues 165 to 211 (QQVA…DFAD), 307 to 338 (DSPVAATKGPENEEGGAQGSPMPEANPDNLEN), and 353 to 383 (LLALPKDDIPGLPRSPSGKMKGLPSVTPAAA). 2 tandem repeats follow at residues 189 to 201 (PSLPGMDFPDPQG) and 202 to 214 (PSLPGLDFADPQG).

This sequence belongs to the ameloblastin family. In terms of tissue distribution, ameloblast-specific. Located at the Tomes processes of secretory ameloblasts and in the sheath space between rod-interrod enamel.

The protein localises to the secreted. It localises to the extracellular space. It is found in the extracellular matrix. Functionally, involved in the mineralization and structural organization of enamel. This is Ameloblastin (AMBN) from Homo sapiens (Human).